The primary structure comprises 273 residues: 4-hydroxy-tetrahydrodipicolinate reductase (273 aa).

12–17 (GSGGRM) lines the NAD(+) pocket. Arg39 contributes to the NADP(+) binding site. Residues 102-104 (GTT) and 126-129 (AANF) contribute to the NAD(+) site. The Proton donor/acceptor role is filled by His159. Position 160 (His160) interacts with (S)-2,3,4,5-tetrahydrodipicolinate. Lys163 functions as the Proton donor in the catalytic mechanism. 169–170 (GT) contributes to the (S)-2,3,4,5-tetrahydrodipicolinate binding site.

It belongs to the DapB family. As to quaternary structure, homotetramer.

The protein resides in the cytoplasm. The enzyme catalyses (S)-2,3,4,5-tetrahydrodipicolinate + NAD(+) + H2O = (2S,4S)-4-hydroxy-2,3,4,5-tetrahydrodipicolinate + NADH + H(+). It catalyses the reaction (S)-2,3,4,5-tetrahydrodipicolinate + NADP(+) + H2O = (2S,4S)-4-hydroxy-2,3,4,5-tetrahydrodipicolinate + NADPH + H(+). It participates in amino-acid biosynthesis; L-lysine biosynthesis via DAP pathway; (S)-tetrahydrodipicolinate from L-aspartate: step 4/4. Catalyzes the conversion of 4-hydroxy-tetrahydrodipicolinate (HTPA) to tetrahydrodipicolinate. In Serratia proteamaculans (strain 568), this protein is 4-hydroxy-tetrahydrodipicolinate reductase.